Consider the following 532-residue polypeptide: Probable cytochrome c oxidase subunit 1 (532 aa).

8 helical membrane passes run 33 to 53 (IMYI…SLLF), 74 to 94 (VLIT…ALFG), 95 to 115 (GFGN…FPRL), 118 to 138 (ISFW…FVDG), 163 to 183 (MAIF…INLI), 200 to 220 (PLFV…MPVL), 252 to 272 (LFWF…FGIV), and 284 to 304 (IFGY…GFIV). A Fe(II)-heme a-binding site is contributed by His79. Residues His258 and Tyr262 each contribute to the Cu cation site. Cu cation contacts are provided by His307 and His308. 2 helical membrane passes run 318 to 338 (ALIY…IKIF) and 355 to 375 (MLFS…GIIL). Position 393 (His393) interacts with heme a3. Helical transmembrane passes span 394–414 (FHYT…YYWF), 431–451 (FWIT…LGLA), and 473–493 (IGAG…FYTL). A Fe(II)-heme a-binding site is contributed by His395.

The protein belongs to the heme-copper respiratory oxidase family.

The protein localises to the cell membrane. The enzyme catalyses 4 Fe(II)-[cytochrome c] + O2 + 8 H(+)(in) = 4 Fe(III)-[cytochrome c] + 2 H2O + 4 H(+)(out). It functions in the pathway energy metabolism; oxidative phosphorylation. Functionally, cytochrome c oxidase is the component of the respiratory chain that catalyzes the reduction of oxygen to water. Subunits 1-3 form the functional core of the enzyme complex. CO I is the catalytic subunit of the enzyme. Electrons originating in cytochrome c are transferred via the copper A center of subunit 2 and heme A of subunit 1 to the bimetallic center formed by heme A3 and copper B. The polypeptide is Probable cytochrome c oxidase subunit 1 (ctaD) (Rickettsia felis (strain ATCC VR-1525 / URRWXCal2) (Rickettsia azadi)).